The primary structure comprises 341 residues: Farnesyl pyrophosphate synthase (341 aa).

Residues Lys48, Arg51, and Gln86 each contribute to the isopentenyl diphosphate site. Asp93 and Asp97 together coordinate Mg(2+). Residue Arg102 coordinates dimethylallyl diphosphate. Arg103 is an isopentenyl diphosphate binding site. Dimethylallyl diphosphate-binding residues include Lys190, Thr191, Gln229, and Lys246.

This sequence belongs to the FPP/GGPP synthase family. The cofactor is Mg(2+).

The protein localises to the cytoplasm. It catalyses the reaction isopentenyl diphosphate + dimethylallyl diphosphate = (2E)-geranyl diphosphate + diphosphate. The catalysed reaction is isopentenyl diphosphate + (2E)-geranyl diphosphate = (2E,6E)-farnesyl diphosphate + diphosphate. Its pathway is isoprenoid biosynthesis; farnesyl diphosphate biosynthesis; farnesyl diphosphate from geranyl diphosphate and isopentenyl diphosphate: step 1/1. The protein operates within isoprenoid biosynthesis; geranyl diphosphate biosynthesis; geranyl diphosphate from dimethylallyl diphosphate and isopentenyl diphosphate: step 1/1. Catalyzes the sequential condensation of isopentenyl pyrophosphate with the allylic pyrophosphates, dimethylallyl pyrophosphate, and then with the resultant geranylpyrophosphate to the ultimate product farnesyl pyrophosphate. In Helianthus annuus (Common sunflower), this protein is Farnesyl pyrophosphate synthase (FPS1).